The following is a 784-amino-acid chain: Probable leucine-rich repeat receptor-like protein kinase IMK3 (784 aa).

Positions 1-48 (MEFITQNQAITSLSMINTDIDQPKASLRSRFLLHLIICLLFFVPPCSS) are cleaved as a signal peptide. Residues 49–409 (QAWDGVVITQ…PSHRNLSTKD (361 aa)) are Extracellular-facing. An N-linked (GlcNAc...) asparagine glycan is attached at Asn82. LRR repeat units follow at residues 126–148 (ALRKLSLHDNNLGGSIPMSLGLI), 150–172 (NLRGVQLFNNRLTGSIPASLGVS), 174–197 (FLQTLDLSNNLLSEIIPPNLADSS), 198–220 (KLLRLNLSFNSLSGQIPVSLSRS), 222–242 (SLQFLALDHNNLSGPILDTWG), 247–268 (NLRVLSLDHNSLSGPFPFSLCN), 271–294 (QLQDFSFSHNRIRGTLPSELSKLT), 295–317 (KLRKMDISGNSVSGHIPETLGNI), 319–342 (SLIHLDLSQNKLTGEIPISISDLE), and 343–365 (SLNFFNVSYNNLSGPVPTLLSQK). 3 N-linked (GlcNAc...) asparagine glycosylation sites follow: Asn203, Asn232, and Asn268. Asn316 carries an N-linked (GlcNAc...) asparagine glycan. N-linked (GlcNAc...) asparagine glycosylation is found at Asn348, Asn353, Asn367, and Asn404. The helical transmembrane segment at 410-430 (IILIASGALLIVMLILVCVLC) threads the bilayer. The Cytoplasmic portion of the chain corresponds to 431 to 784 (CLLRKKANET…VPEASASTSQ (354 aa)). Positions 441–467 (KAKGGEAGPGAVAAKTEKGGEAEAGGE) are disordered. A Protein kinase domain is found at 488–773 (CATAEIMGKS…TTATTSEPLI (286 aa)). Residues 494–502 (MGKSTYGTV) and Lys516 each bind ATP. The tract at residues 760-784 (RPEETTATTSEPLIDVPEASASTSQ) is disordered.

This sequence belongs to the protein kinase superfamily. Ser/Thr protein kinase family. In terms of assembly, interacts with AGL24. Post-translationally, autophosphorylated. Expressed in meristems, including roots, vegetative, inflorescence and floral meristems, and in embryos.

It is found in the cell membrane. The catalysed reaction is L-seryl-[protein] + ATP = O-phospho-L-seryl-[protein] + ADP + H(+). It carries out the reaction L-threonyl-[protein] + ATP = O-phospho-L-threonyl-[protein] + ADP + H(+). In terms of biological role, can phosphorylate AGL24. The polypeptide is Probable leucine-rich repeat receptor-like protein kinase IMK3 (IMK3) (Arabidopsis thaliana (Mouse-ear cress)).